The following is a 175-amino-acid chain: Ribosome maturation factor RimM (175 aa).

The 81-residue stretch at 95–175 folds into the PRC barrel domain; it reads SEDEFYWREL…RIEVDWDPGF (81 aa).

The protein belongs to the RimM family. Binds ribosomal protein uS19.

Its subcellular location is the cytoplasm. An accessory protein needed during the final step in the assembly of 30S ribosomal subunit, possibly for assembly of the head region. Essential for efficient processing of 16S rRNA. May be needed both before and after RbfA during the maturation of 16S rRNA. It has affinity for free ribosomal 30S subunits but not for 70S ribosomes. This is Ribosome maturation factor RimM from Aliivibrio fischeri (strain MJ11) (Vibrio fischeri).